Consider the following 199-residue polypeptide: N-(5'-phosphoribosyl)anthranilate isomerase (199 aa).

The protein belongs to the TrpF family.

It carries out the reaction N-(5-phospho-beta-D-ribosyl)anthranilate = 1-(2-carboxyphenylamino)-1-deoxy-D-ribulose 5-phosphate. Its pathway is amino-acid biosynthesis; L-tryptophan biosynthesis; L-tryptophan from chorismate: step 3/5. This Streptococcus pneumoniae serotype 19F (strain G54) protein is N-(5'-phosphoribosyl)anthranilate isomerase.